Reading from the N-terminus, the 214-residue chain is GTP-binding protein ypt3 (214 aa).

17 to 24 (GDSGVGKS) contributes to the GTP binding site. An Effector region motif is present at residues 39 to 47 (SKSTIGVEF). Phosphothreonine is present on Thr42. Residues 65 to 69 (DTAGQ) and 123 to 126 (NKTD) contribute to the GTP site. Residues Cys213 and Cys214 are each lipidated (S-geranylgeranyl cysteine).

It belongs to the small GTPase superfamily. Rab family.

The protein resides in the cell membrane. The protein localises to the endosome membrane. It is found in the golgi apparatus membrane. It localises to the cytoplasm. Its subcellular location is the nucleus. Functionally, has a role in retrograde traffricking of proteins from the endosome to the Golgi. Involved in the secretory pathway where it has a role in acid phosphatase secretion. This is GTP-binding protein ypt3 (ypt3) from Schizosaccharomyces pombe (strain 972 / ATCC 24843) (Fission yeast).